Here is a 241-residue protein sequence, read N- to C-terminus: Uridylate kinase (241 aa).

Residue 15 to 18 (KMSG) participates in ATP binding. A UMP-binding site is contributed by Gly-57. Positions 58 and 62 each coordinate ATP. Residues Asp-77 and 138-145 (TGNPFFTT) contribute to the UMP site. ATP contacts are provided by Thr-165, Tyr-171, and Asp-174.

This sequence belongs to the UMP kinase family. As to quaternary structure, homohexamer.

It is found in the cytoplasm. It carries out the reaction UMP + ATP = UDP + ADP. Its pathway is pyrimidine metabolism; CTP biosynthesis via de novo pathway; UDP from UMP (UMPK route): step 1/1. Its activity is regulated as follows. Inhibited by UTP. Its function is as follows. Catalyzes the reversible phosphorylation of UMP to UDP. In Dichelobacter nodosus (strain VCS1703A), this protein is Uridylate kinase.